Reading from the N-terminus, the 229-residue chain is Glutathione S-transferase 1 (229 aa).

The region spanning 2–86 is the GST N-terminal domain; sequence AQFTLWSHAH…YLADKYDTER (85 aa). Residues 93–229 form the GST C-terminal domain; that stretch reads DHPEYYKVIQ…FEERSKALDN (137 aa).

Belongs to the GST superfamily.

The enzyme catalyses RX + glutathione = an S-substituted glutathione + a halide anion + H(+). Its function is as follows. Involved in the oxidative stress response and detoxification. The polypeptide is Glutathione S-transferase 1 (gst1) (Schizosaccharomyces pombe (strain 972 / ATCC 24843) (Fission yeast)).